Consider the following 176-residue polypeptide: ATP-dependent protease subunit HslV (176 aa).

The active site involves Thr-5. Na(+) contacts are provided by Gly-161, Cys-164, and Thr-167.

It belongs to the peptidase T1B family. HslV subfamily. In terms of assembly, a double ring-shaped homohexamer of HslV is capped on each side by a ring-shaped HslU homohexamer. The assembly of the HslU/HslV complex is dependent on binding of ATP.

The protein localises to the cytoplasm. The enzyme catalyses ATP-dependent cleavage of peptide bonds with broad specificity.. Allosterically activated by HslU binding. Its function is as follows. Protease subunit of a proteasome-like degradation complex believed to be a general protein degrading machinery. This chain is ATP-dependent protease subunit HslV, found in Sulfurovum sp. (strain NBC37-1).